The chain runs to 245 residues: Phosphoadenosine 5'-phosphosulfate reductase (245 aa).

The active-site Nucleophile; cysteine thiosulfonate intermediate is the cysteine 239.

The protein belongs to the PAPS reductase family. CysH subfamily.

It is found in the cytoplasm. It catalyses the reaction [thioredoxin]-disulfide + sulfite + adenosine 3',5'-bisphosphate + 2 H(+) = [thioredoxin]-dithiol + 3'-phosphoadenylyl sulfate. It functions in the pathway sulfur metabolism; hydrogen sulfide biosynthesis; sulfite from sulfate: step 3/3. Functionally, catalyzes the formation of sulfite from phosphoadenosine 5'-phosphosulfate (PAPS) using thioredoxin as an electron donor. In Shewanella oneidensis (strain ATCC 700550 / JCM 31522 / CIP 106686 / LMG 19005 / NCIMB 14063 / MR-1), this protein is Phosphoadenosine 5'-phosphosulfate reductase.